Here is a 471-residue protein sequence, read N- to C-terminus: Tryptophanase (471 aa).

N6-acetyllysine is present on residues lysine 5, lysine 115, and lysine 156. At lysine 270 the chain carries N6-(pyridoxal phosphate)lysine. Lysine 450 carries the post-translational modification N6-acetyllysine.

Belongs to the beta-eliminating lyase family. As to quaternary structure, homotetramer. Pyridoxal 5'-phosphate is required as a cofactor.

It catalyses the reaction L-tryptophan + H2O = indole + pyruvate + NH4(+). It functions in the pathway amino-acid degradation; L-tryptophan degradation via pyruvate pathway; indole and pyruvate from L-tryptophan: step 1/1. This is Tryptophanase from Escherichia coli O139:H28 (strain E24377A / ETEC).